The chain runs to 521 residues: MFTSEIGVVEEWLSEFKTLPETSLPNYATNLKDKSSLVTSLYKVIQEPQSELLEPVCHQLFEFYRSGEEQLLRFTLQFLPELMWCYLAVSASRDVHSSGCIEALLLGVYNLEIVDKHGHSKVLSFTIPSLSKPSVYHEPSSIGSMALTESALSQHGLSKVVYSGPHPQREMLTAQNRFEVLTFLLLCYNAALTYMPSVSLQSLCQICSRICVCGYPRQHVRKYRGVSSRIPISSGFMVQMLTGVYFAIYNGEWDLAQKALDDIIYRAQLELYPEPLLVANAIKASLPHGAMKSSKEGTRCIQVEITPTSSRISRNAVTSMSIRGHRWKRHGDTELTGQEELMDITEVDEGFYSRAASSTSQSGLSNSSHNCSNKTSVGKNQRRSGGSKAGAKERETAGESCRDHFARKQTQRAQSENLELLSLKRLTLTSSQSLPKPSSQGLAKTAATVFSKSFEQVSGAPVPRSPSPAIGCVAGADANRFSACSLQEEKLIYVSERTELAVKCQAGQQGPPSISVTLSAE.

Residue T306 is modified to Phosphothreonine. The residue at position 321 (S321) is a Phosphoserine. Low complexity predominate over residues 355–373 (AASSTSQSGLSNSSHNCSN). The interval 355-413 (AASSTSQSGLSNSSHNCSNKTSVGKNQRRSGGSKAGAKERETAGESCRDHFARKQTQRA) is disordered. Positions 390–406 (GAKERETAGESCRDHFA) are enriched in basic and acidic residues. Residues S415, S422, S433, S453, and S465 each carry the phosphoserine modification.

The protein belongs to the Hyccin family. In terms of assembly, component of a phosphatidylinositol 4-kinase (PI4K) complex, composed of PI4KA, EFR3 (EFR3A or EFR3B), TTC7 (TTC7A or TTC7B) and HYCC (HYCC1 or HYCC2). Interacts with TTC7 (TTC7A or TTC7B), interaction is direct. Predominantly expressed in the central nervous system, where it is found in neurons but not in myelinating cells. Lower abundance is observed in peripheral neurons, where it is detectable only at early postnatal ages. Expressed in both oligodendrocytes and neurons.

It localises to the cytoplasm. The protein resides in the cytosol. The protein localises to the cell membrane. In terms of biological role, component of a complex required to localize phosphatidylinositol 4-kinase (PI4K) to the plasma membrane. The complex acts as a regulator of phosphatidylinositol 4-phosphate (PtdIns(4)P) synthesis. HYCC1 plays a key role in oligodendrocytes formation, a cell type with expanded plasma membrane that requires generation of PtdIns(4)P. Its role in oligodendrocytes formation probably explains its importance in myelination of the central and peripheral nervous system. May also have a role in the beta-catenin/Lef signaling pathway. The protein is Hyccin (Hycc1) of Mus musculus (Mouse).